A 161-amino-acid polypeptide reads, in one-letter code: Allophycocyanin alpha chain 2 (161 aa).

Asparagine 71 carries the N4-methylasparagine modification. Position 81 (cysteine 81) interacts with (2R,3E)-phycocyanobilin.

Belongs to the phycobiliprotein family. As to quaternary structure, component of the phycobilisome. Heterodimer of an alpha and a beta chain. Post-translationally, contains one covalently linked bilin chromophore.

It localises to the cellular thylakoid membrane. Functionally, light-harvesting photosynthetic bile pigment-protein from the phycobiliprotein complex. Allophycocyanin has a maximum absorption at approximately 650 nanometers. The polypeptide is Allophycocyanin alpha chain 2 (apcA2) (Microchaete diplosiphon (Fremyella diplosiphon)).